The primary structure comprises 365 residues: Aminomethyltransferase (365 aa).

The protein belongs to the GcvT family. The glycine cleavage system is composed of four proteins: P, T, L and H.

It catalyses the reaction N(6)-[(R)-S(8)-aminomethyldihydrolipoyl]-L-lysyl-[protein] + (6S)-5,6,7,8-tetrahydrofolate = N(6)-[(R)-dihydrolipoyl]-L-lysyl-[protein] + (6R)-5,10-methylene-5,6,7,8-tetrahydrofolate + NH4(+). The glycine cleavage system catalyzes the degradation of glycine. The protein is Aminomethyltransferase of Yersinia pseudotuberculosis serotype O:3 (strain YPIII).